A 505-amino-acid chain; its full sequence is Peroxisome proliferator-activated receptor gamma (505 aa).

Residues 1-26 (MGETLGDSLIDPESDSFADTLSASTS) are disordered. The span at 17–26 (FADTLSASTS) shows a compositional bias: polar residues. Ser112 is subject to Phosphoserine; by MAPK. The segment at residues 136–210 (AIECRVCGDK…VGMSHNAIRF (75 aa)) is a DNA-binding region (nuclear receptor). 2 consecutive NR C4-type zinc fingers follow at residues 139–159 (CRVC…CEGC) and 176–198 (CDLN…FQKC). The interaction with FAM120B stretch occupies residues 205–280 (HNAIRFGRMP…DKSPFVIYDM (76 aa)). The 266-residue stretch at 238 to 503 (DLRALAKHLY…HPLLQEIYKD (266 aa)) folds into the NR LBD domain. Lys252 participates in a covalent cross-link: Glycyl lysine isopeptide (Lys-Gly) (interchain with G-Cter in ubiquitin). Positions 495-503 (PLLQEIYKD) match the 9aaTAD motif.

Belongs to the nuclear hormone receptor family. NR1 subfamily. Interacts with FOXO1 (acetylated form). Heterodimer with other nuclear receptors, such as RXRA. The heterodimer with the retinoic acid receptor RXRA is called adipocyte-specific transcription factor ARF6. Interacts with NCOA6 coactivator, leading to a strong increase in transcription of target genes. Interacts with coactivator PPARBP, leading to a mild increase in transcription of target genes. Interacts with NOCA7 in a ligand-inducible manner. Interacts with NCOA1 and NCOA2 LXXLL motifs. Interacts with ASXL1, ASXL2, DNTTIP2, FAM120B, MAP2K1/MEK1, NR0B2, PDPK1, PRDM16, PRMT2 and TGFB1I1. Interacts (when activated by agonist) with PPP5C. Interacts with HELZ2 and THRAP3; the interaction stimulates the transcriptional activity of PPARG. Interacts with PER2, the interaction is ligand dependent and blocks PPARG recruitment to target promoters. Interacts with NOCT. Interacts with ACTN4. Interacts (when in the liganded conformation) with GPS2. Interacts with CRY1 and CRY2 in a ligand-dependent manner. In the absence of hormonal ligand, interacts with TACC1. In macrophages, interacts with PAQR3 and STUB1; the interactions promote PPARG poylubiquitination and STUB1-mediated degradation. Phosphorylated at basal conditions and dephosphorylated when treated with the ligand. May be dephosphorylated by PPP5C. The phosphorylated form may be inactive and dephosphorylation induces adipogenic activity. In terms of processing, ubiquitinated by E3 ubiquitin-protein ligase complex containing FBXO9; leading to proteasomal degradation. Ubiquitinated at Lys-252 by TRIM55 leading to proteasomal degradation. Ubiquitinated by E3 ubiquitin-protein ligase STUB1/CHIP; leading to proteasomal degradation.

The protein localises to the nucleus. Its subcellular location is the cytoplasm. PDPK1 activates its transcriptional activity independently of its kinase activity. Its function is as follows. Nuclear receptor that binds peroxisome proliferators such as hypolipidemic drugs and fatty acids. Once activated by a ligand, the nuclear receptor binds to DNA specific PPAR response elements (PPRE) and modulates the transcription of its target genes, such as acyl-CoA oxidase. It therefore controls the peroxisomal beta-oxidation pathway of fatty acids. Key regulator of adipocyte differentiation and glucose homeostasis. ARF6 acts as a key regulator of the tissue-specific adipocyte P2 (aP2) enhancer. Acts as a critical regulator of gut homeostasis by suppressing NF-kappa-B-mediated pro-inflammatory responses. Plays a role in the regulation of cardiovascular circadian rhythms by regulating the transcription of BMAL1 in the blood vessels. This Canis lupus familiaris (Dog) protein is Peroxisome proliferator-activated receptor gamma (PPARG).